Here is a 933-residue protein sequence, read N- to C-terminus: Progesterone receptor (933 aa).

Residues M1 to L164 are AF3; mediates transcriptional activation. The interval M1–V256 is disordered. The segment at M1–I566 is modulating, Pro-Rich. S20 carries the phosphoserine modification. An LXXL motif 1 motif is present at residues L55–L59. S81 carries the phosphoserine modification. An LXXL motif 2 motif is present at residues L115–L119. Phosphoserine is present on residues S130 and S162. The interval M165 to H305 is mediates transcriptional transrepression. Residues K183–R187 carry the Nuclear localization signal motif. S190 and S213 each carry phosphoserine. Acidic residues predominate over residues E220–E231. Residues S232–G246 show a composition bias toward low complexity. A Phosphoserine; by MAPK1 modification is found at S294. The segment at G331–S378 is disordered. Low complexity predominate over residues A335 to S350. S345 is modified (phosphoserine; by MAPK). Residue K388 forms a Glycyl lysine isopeptide (Lys-Gly) (interchain with G-Cter in SUMO); alternate linkage. A Glycyl lysine isopeptide (Lys-Gly) (interchain with G-Cter in ubiquitin); alternate cross-link involves residue K388. At S400 the chain carries Phosphoserine; by CDK2. The segment at P415–S452 is disordered. Residues P418–R433 show a composition bias toward pro residues. The segment covering P434–S452 has biased composition (low complexity). An AF1; mediates transcriptional activation region spans residues S456–R546. A Glycyl lysine isopeptide (Lys-Gly) (interchain with G-Cter in SUMO) cross-link involves residue K531. 2 NR C4-type zinc fingers span residues C567–C587 and C603–C627. The segment at residues C567–F639 is a DNA-binding region (nuclear receptor). S676 is modified (phosphoserine). The NR LBD domain maps to Q679–I913. Residues L687 to K933 are AF2; mediates transcriptional activation. Position 766 (R766) interacts with progesterone.

It belongs to the nuclear hormone receptor family. Interacts with SMARD1 and UNC45A. Interacts with CUEDC2; the interaction promotes ubiquitination, decreases sumoylation, and represses transcriptional activity. Interacts with PIAS3; the interaction promotes sumoylation of PR in a hormone-dependent manner, inhibits DNA-binding, and alters nuclear export. Interacts with SP1; the interaction requires ligand-induced phosphorylation on Ser-345 by ERK1/2-MAPK. Interacts with PRMT2. Interacts with NCOA2 and NCOA1. Interacts with KLF9. Interacts with GTF2B. Post-translationally, phosphorylated on multiple serine sites. Several of these sites are hormone-dependent. Phosphorylation on Ser-294 is highly hormone-dependent and modulates ubiquitination and sumoylation on Lys-388. Phosphorylation on Ser-102 and Ser-345 also requires induction by hormone. Basal phosphorylation on Ser-81, Ser-162, Ser-190 and Ser-400 is increased in response to progesterone and can be phosphorylated in vitro by the CDK2-A1 complex. Increased levels of phosphorylation on Ser-400 also in the presence of EGF, heregulin, IGF, PMA and FBS. Phosphorylation at this site by CDK2 is ligand-independent, and increases nuclear translocation and transcriptional activity. Phosphorylation at Ser-162 and Ser-294, but not at Ser-190, is impaired during the G(2)/M phase of the cell cycle. Phosphorylation on Ser-345 by ERK1/2 MAPK is required for interaction with SP1. In terms of processing, sumoylation is hormone-dependent and represses transcriptional activity. Sumoylation on all three sites is enhanced by PIAS3. Desumoylated by SENP1. Sumoylation on Lys-388, the main site of sumoylation, is repressed by ubiquitination on the same site, and modulated by phosphorylation at Ser-294. Ubiquitination is hormone-dependent and represses sumoylation on the same site. Promoted by MAPK-mediated phosphorylation on Ser-294. Ubiquitinated by UBR5, leading to its degradation: UBR5 specifically recognizes and binds ligand-bound PGR when it is not associated with coactivators (NCOAs). In presence of NCOAs, the UBR5-degron is not accessible, preventing its ubiquitination and degradation. Post-translationally, palmitoylated by ZDHHC7 and ZDHHC21. Palmitoylation is required for plasma membrane targeting and for rapid intracellular signaling via ERK and AKT kinases and cAMP generation.

Its subcellular location is the nucleus. It is found in the cytoplasm. Its function is as follows. The steroid hormones and their receptors are involved in the regulation of eukaryotic gene expression and affect cellular proliferation and differentiation in target tissues. Transcriptional activator of several progesteron-dependent promoters in a variety of cell types. Involved in activation of SRC-dependent MAPK signaling on hormone stimulation. This is Progesterone receptor (PGR) from Pan paniscus (Pygmy chimpanzee).